We begin with the raw amino-acid sequence, 289 residues long: Coiled-coil domain-containing protein 137 (289 aa).

Disordered regions lie at residues 1-64 (MAGA…QEIP), 149-184 (EVQA…EKAA), and 204-225 (QPPE…GRRS). Low complexity predominate over residues 7–20 (GAAVSRVQAGPGSP). Phosphoserine is present on serine 19. Residues 155 to 197 (KEKSEQKKAKKAFQKRRLDKVRRKKEEKAADRLEQELLRDTVK) adopt a coiled-coil conformation. The segment covering 162-177 (KAKKAFQKRRLDKVRR) has biased composition (basic residues). Serine 233 bears the Phosphoserine mark. Residues 247 to 273 (RQRIVEEERERAVQAYRALKQRQQQLH) adopt a coiled-coil conformation. The interval 265 to 289 (LKQRQQQLHGERPHLTSRKKPEPQL) is disordered. Over residues 273 to 289 (HGERPHLTSRKKPEPQL) the composition is skewed to basic and acidic residues.

The protein localises to the chromosome. The chain is Coiled-coil domain-containing protein 137 (CCDC137) from Homo sapiens (Human).